The following is a 315-amino-acid chain: Olfactory receptor 2T5 (315 aa).

The Extracellular portion of the chain corresponds to 1-29 (MANITRMANHTGKLDFILMGLFRRSKHPA). Asn3 and Asn9 each carry an N-linked (GlcNAc...) asparagine glycan. A helical membrane pass occupies residues 30–53 (LLSVVIFVVFLKALSGNAVLILLI). Over 54–61 (HCDAHLHS) the chain is Cytoplasmic. A helical membrane pass occupies residues 62-83 (PMYFFISQLSLMDMAYISVTVP). Topologically, residues 84–104 (KMLLDQVMGVNKVSAPECGMQ) are extracellular. Cysteines 101 and 193 form a disulfide. A helical transmembrane segment spans residues 105-124 (MFLYLTLAGSEFFLLATMAY). At 125–143 (DRYVAICHPLRYPVLMNHR) the chain is on the cytoplasmic side. Residues 144 to 162 (VCLFLASGCWFLGSVDGFM) form a helical membrane-spanning segment. At 163-199 (LTPITMSFPFCRSWEIHHFFCEVPAVTILSCSDTSLY) the chain is on the extracellular side. The chain crosses the membrane as a helical span at residues 200 to 223 (ETLMYLCCVLMLLIPVTIISSSYL). Residues 224–240 (LILLTVHRMNSAEGRKK) are Cytoplasmic-facing. Residues 241 to 263 (AFATCSSHLTVVILFYGAAVYTY) traverse the membrane as a helical segment. The Extracellular portion of the chain corresponds to 264-276 (MLPSSYHTPEKDM). A helical transmembrane segment spans residues 277-296 (MVSVFYTILTPVLNPLIYSL). Residues 297–315 (RNKDVMGALKKMLTVRFVL) are Cytoplasmic-facing.

This sequence belongs to the G-protein coupled receptor 1 family.

The protein resides in the cell membrane. Odorant receptor. The chain is Olfactory receptor 2T5 (OR2T5) from Homo sapiens (Human).